The sequence spans 218 residues: Small ribosomal subunit protein uS3 (218 aa).

Positions 38–106 (IRTFLKKKLY…KLVVDIKEVK (69 aa)) constitute a KH type-2 domain.

The protein belongs to the universal ribosomal protein uS3 family. Part of the 30S ribosomal subunit. Forms a tight complex with proteins S10 and S14.

Binds the lower part of the 30S subunit head. Binds mRNA in the 70S ribosome, positioning it for translation. The protein is Small ribosomal subunit protein uS3 of Agathobacter rectalis (strain ATCC 33656 / DSM 3377 / JCM 17463 / KCTC 5835 / VPI 0990) (Eubacterium rectale).